The chain runs to 72 residues: Translation initiation factor IF-1 (72 aa).

The 72-residue stretch at 1-72 folds into the S1-like domain; the sequence is MAKEDSIRMQ…NKGRIVYRER (72 aa).

This sequence belongs to the IF-1 family. In terms of assembly, component of the 30S ribosomal translation pre-initiation complex which assembles on the 30S ribosome in the order IF-2 and IF-3, IF-1 and N-formylmethionyl-tRNA(fMet); mRNA recruitment can occur at any time during PIC assembly.

Its subcellular location is the cytoplasm. Functionally, one of the essential components for the initiation of protein synthesis. Stabilizes the binding of IF-2 and IF-3 on the 30S subunit to which N-formylmethionyl-tRNA(fMet) subsequently binds. Helps modulate mRNA selection, yielding the 30S pre-initiation complex (PIC). Upon addition of the 50S ribosomal subunit IF-1, IF-2 and IF-3 are released leaving the mature 70S translation initiation complex. This is Translation initiation factor IF-1 from Halorhodospira halophila (strain DSM 244 / SL1) (Ectothiorhodospira halophila (strain DSM 244 / SL1)).